The following is a 136-amino-acid chain: MTERTLILIKPDGVTNGHVGEIIARIERKGLKLAALDLRVADRETAEKHYEEHADKPFFGELVEFITSAPLIAGIVEGERAIDAWRQLAGGTDPVAKATPGTIRGDFALTVGENVVHGSDSPESAEREISIWFPNL.

6 residues coordinate ATP: K10, F58, R86, T92, R104, and N114. The active-site Pros-phosphohistidine intermediate is H117.

Belongs to the NDK family. In terms of assembly, homotetramer. It depends on Mg(2+) as a cofactor.

It localises to the cytoplasm. The catalysed reaction is a 2'-deoxyribonucleoside 5'-diphosphate + ATP = a 2'-deoxyribonucleoside 5'-triphosphate + ADP. The enzyme catalyses a ribonucleoside 5'-diphosphate + ATP = a ribonucleoside 5'-triphosphate + ADP. Its function is as follows. Major role in the synthesis of nucleoside triphosphates other than ATP. The ATP gamma phosphate is transferred to the NDP beta phosphate via a ping-pong mechanism, using a phosphorylated active-site intermediate. The sequence is that of Nucleoside diphosphate kinase from Corynebacterium glutamicum (strain R).